A 133-amino-acid polypeptide reads, in one-letter code: Putative pre-16S rRNA nuclease (133 aa).

It belongs to the YqgF nuclease family.

The protein localises to the cytoplasm. In terms of biological role, could be a nuclease involved in processing of the 5'-end of pre-16S rRNA. The protein is Putative pre-16S rRNA nuclease of Alcanivorax borkumensis (strain ATCC 700651 / DSM 11573 / NCIMB 13689 / SK2).